We begin with the raw amino-acid sequence, 385 residues long: NADH-quinone oxidoreductase subunit H (385 aa).

8 consecutive transmembrane segments (helical) span residues 14 to 34 (GLKLVVIFLMMVQAVPILVWL), 80 to 100 (FLYYAAPIFALIPGAVAFSAI), 130 to 150 (IGVGIVFILGVSSLAAYTLLM), 172 to 192 (ISYELALGLSIVGVIMLYGTF), 219 to 239 (LPNWGIFYQPVGALLFFSAAF), 280 to 300 (MMIASGLMVLFFFGGYTIPYV), 325 to 345 (LIHFLVFNIKFGFFMWVFIWV), and 365 to 385 (MLPWALANTIITAFVIYIASL).

This sequence belongs to the complex I subunit 1 family. In terms of assembly, NDH-1 is composed of 14 different subunits. Subunits NuoA, H, J, K, L, M, N constitute the membrane sector of the complex.

The protein localises to the cell inner membrane. The enzyme catalyses a quinone + NADH + 5 H(+)(in) = a quinol + NAD(+) + 4 H(+)(out). In terms of biological role, NDH-1 shuttles electrons from NADH, via FMN and iron-sulfur (Fe-S) centers, to quinones in the respiratory chain. The immediate electron acceptor for the enzyme in this species is believed to be ubiquinone. Couples the redox reaction to proton translocation (for every two electrons transferred, four hydrogen ions are translocated across the cytoplasmic membrane), and thus conserves the redox energy in a proton gradient. This subunit may bind ubiquinone. The sequence is that of NADH-quinone oxidoreductase subunit H from Bdellovibrio bacteriovorus (strain ATCC 15356 / DSM 50701 / NCIMB 9529 / HD100).